The sequence spans 98 residues: uncharacterized protein (98 aa).

It belongs to the HesB/IscA family.

This is an uncharacterized protein from Staphylococcus aureus (strain USA300).